The primary structure comprises 32 residues: MSDIN-like toxin proprotein 2 (32 aa).

A propeptide spanning residues 1 to 10 (MSDINATRVP) is cleaved from the precursor. The segment at residues 11–17 (AWLAECP) is a cross-link (cyclopeptide (Ala-Pro)). Positions 18–32 (CVGDDISHLLTRGEK) are excised as a propeptide.

It belongs to the MSDIN fungal toxin family. In terms of processing, processed by the macrocyclase-peptidase enzyme POPB to yield a toxic cyclic heptapeptide. POPB first removes 10 residues from the N-terminus. Conformational trapping of the remaining peptide forces the enzyme to release this intermediate rather than proceed to macrocyclization. The enzyme rebinds the remaining peptide in a different conformation and catalyzes macrocyclization of the N-terminal 7 residues.

In terms of biological role, probable toxin that belongs to the MSDIN-like toxin family responsible for a large number of food poisoning cases and deaths. The sequence is that of MSDIN-like toxin proprotein 2 from Amanita rimosa.